The sequence spans 93 residues: Acylphosphatase (93 aa).

The Acylphosphatase-like domain occupies 5–93 (TAILRVTGFV…EDRKTFDIVY (89 aa)). Active-site residues include Arg20 and Asn38.

This sequence belongs to the acylphosphatase family.

The enzyme catalyses an acyl phosphate + H2O = a carboxylate + phosphate + H(+). The chain is Acylphosphatase (acyP) from Listeria welshimeri serovar 6b (strain ATCC 35897 / DSM 20650 / CCUG 15529 / CIP 8149 / NCTC 11857 / SLCC 5334 / V8).